The sequence spans 653 residues: Large subunit GTPase 1 homolog (653 aa).

Residues 1-31 (MGRRRAPAGGSLGRALMRHQTQRSRSHRHTD) form a disordered region. Basic residues predominate over residues 16–28 (LMRHQTQRSRSHR). Phosphoserine is present on residues Ser-93 and Ser-97. A CP-type G domain is found at 164-445 (WRQLWRVIER…LCDCPGLVMP (282 aa)). 212–215 (NKAD) lines the GTP pocket. Positions 251 to 358 (DSEEEANKDD…RKTPQKRQLH (108 aa)) are disordered. Ser-252 bears the Phosphoserine mark. Residues 258-288 (KDDRQSNTAEFEHSSFDEAEISHSETEHLPA) show a composition bias toward basic and acidic residues. Residues 299–333 (TTDEDDSEYEDCPEEEEDDWQTCSEEDGPEEEDCG) show a composition bias toward acidic residues. Residues 394–401 (GYPNVGKS) and 438–441 (DCPG) contribute to the GTP site. The disordered stretch occupies residues 630–653 (SENGAGKPWKKHGNRNKKEKSCRL). Positions 637–647 (PWKKHGNRNKK) are enriched in basic residues.

Belongs to the TRAFAC class YlqF/YawG GTPase family. LSG1 subfamily.

It is found in the cytoplasm. The protein resides in the endoplasmic reticulum. It localises to the nucleus. The protein localises to the cajal body. It carries out the reaction GTP + H2O = GDP + phosphate + H(+). Functions as a GTPase. May act by mediating the release of NMD3 from the 60S ribosomal subunit after export into the cytoplasm during the 60S ribosomal subunit maturation. This is Large subunit GTPase 1 homolog from Macaca fascicularis (Crab-eating macaque).